Reading from the N-terminus, the 282-residue chain is Shikimate dehydrogenase (NADP(+)) (282 aa).

Shikimate-binding positions include 18–20 (SRS) and threonine 65. Lysine 69 acts as the Proton acceptor in catalysis. Glutamate 81 lines the NADP(+) pocket. Asparagine 90 and aspartate 105 together coordinate shikimate. NADP(+) is bound by residues 130–134 (GAGGA), 154–159 (NRTPAR), and methionine 222. Tyrosine 224 contacts shikimate. Glycine 245 provides a ligand contact to NADP(+).

The protein belongs to the shikimate dehydrogenase family. In terms of assembly, homodimer.

The enzyme catalyses shikimate + NADP(+) = 3-dehydroshikimate + NADPH + H(+). It participates in metabolic intermediate biosynthesis; chorismate biosynthesis; chorismate from D-erythrose 4-phosphate and phosphoenolpyruvate: step 4/7. Its function is as follows. Involved in the biosynthesis of the chorismate, which leads to the biosynthesis of aromatic amino acids. Catalyzes the reversible NADPH linked reduction of 3-dehydroshikimate (DHSA) to yield shikimate (SA). The sequence is that of Shikimate dehydrogenase (NADP(+)) from Acidovorax sp. (strain JS42).